A 170-amino-acid polypeptide reads, in one-letter code: S-ribosylhomocysteine lyase (170 aa).

Residues histidine 54, histidine 58, and cysteine 128 each contribute to the Fe cation site.

The protein belongs to the LuxS family. As to quaternary structure, homodimer. Requires Fe cation as cofactor.

The catalysed reaction is S-(5-deoxy-D-ribos-5-yl)-L-homocysteine = (S)-4,5-dihydroxypentane-2,3-dione + L-homocysteine. Involved in the synthesis of autoinducer 2 (AI-2) which is secreted by bacteria and is used to communicate both the cell density and the metabolic potential of the environment. The regulation of gene expression in response to changes in cell density is called quorum sensing. Catalyzes the transformation of S-ribosylhomocysteine (RHC) to homocysteine (HC) and 4,5-dihydroxy-2,3-pentadione (DPD). This Marinomonas sp. (strain MWYL1) protein is S-ribosylhomocysteine lyase.